The following is a 783-amino-acid chain: Flavin carrier protein 2 (783 aa).

The N-terminal stretch at 1–22 (MIFLNTFARCLLTCFVLCSGTA) is a signal peptide. Topologically, residues 23–182 (RSSDTNDTTP…NGKTVQTKYA (160 aa)) are lumenal. Residues Asn-28, Asn-65, Asn-81, and Asn-156 are each glycosylated (N-linked (GlcNAc...) asparagine). A helical transmembrane segment spans residues 183–203 (AWPIAAISGVGVLTSGFVSVI). Over 204–211 (GYSATAAH) the chain is Cytoplasmic. Residues 212-232 (IASNSISLFIYFQNLAITAMM) traverse the membrane as a helical segment. Residues 233–347 (GVSRVPPIAA…AYLANIELSN (115 aa)) lie on the Lumenal side of the membrane. N-linked (GlcNAc...) asparagine glycosylation is present at Asn-323. The helical transmembrane segment at 348–368 (FFLTGIVFFLFFLFVVVVSLI) threads the bilayer. Residues 369–402 (FFKALLEVLTRARILKETSNFFQYRKNWGSIIKG) are Cytoplasmic-facing. A helical transmembrane segment spans residues 403-423 (TLFRLSIIAFPQVSLLAIWEF). At 424–430 (TQVNSPA) the chain is on the lumenal side. A helical transmembrane segment spans residues 431 to 451 (IVVDAVVILLIITGLLVYGTI). At 452–492 (RVFIKGRESLRLYKNPAYLLYSDTYFLNKFGFLYVQFKADK) the chain is on the cytoplasmic side. Residues 493 to 513 (FWWLLPLLSYAFLRSLFVAVL) form a helical membrane-spanning segment. Topologically, residues 514 to 521 (QNQGKAQA) are lumenal. A helical membrane pass occupies residues 522–542 (MIIFVIELAYFVCLCWIRPYL). At 543–547 (DKRTN) the chain is on the cytoplasmic side. A helical membrane pass occupies residues 548 to 568 (VFNIAIHLVNLINAFFFLFFS). The Lumenal segment spans residues 569-581 (NLFKQPAVVSSVM). A helical membrane pass occupies residues 582-602 (AVILFVLNAVFALFLLLFTIV). Residues 603–783 (TCTLALLHRN…ENARNNNPYL (181 aa)) are Cytoplasmic-facing. Residues 681–783 (RLFDDETSSS…ENARNNNPYL (103 aa)) form a disordered region. Positions 688-697 (SSSSFKQNSS) are enriched in low complexity. Composition is skewed to polar residues over residues 704 to 748 (VTEQ…TSSL) and 756 to 767 (YLGNSNKSYSHF). The span at 768 to 783 (NNNGSNENARNNNPYL) shows a compositional bias: low complexity.

Belongs to the transient receptor potential (TRP) ion channel family.

It localises to the endoplasmic reticulum membrane. Functionally, may be responsible for the transport of FAD into the endoplasmic reticulum lumen, where it is required for oxidative protein folding. This Saccharomyces cerevisiae (strain ATCC 204508 / S288c) (Baker's yeast) protein is Flavin carrier protein 2 (FLC2).